A 71-amino-acid chain; its full sequence is Protein MTH_1184 (71 aa).

The polypeptide is Protein MTH_1184 (Methanothermobacter thermautotrophicus (strain ATCC 29096 / DSM 1053 / JCM 10044 / NBRC 100330 / Delta H) (Methanobacterium thermoautotrophicum)).